A 721-amino-acid polypeptide reads, in one-letter code: WD repeat and coiled-coil-containing protein (721 aa).

The residue at position 1 (M1) is an N-acetylmethionine. WD repeat units follow at residues 55–98 (GQFE…MESS) and 154–194 (NTQG…LHRC). Phosphoserine is present on residues S299, S468, S501, and S523. Positions 520 to 537 (QPASLPRHSSTPDHTSTL) are enriched in polar residues. The disordered stretch occupies residues 520–553 (QPASLPRHSSTPDHTSTLEPPRLPQRKNLQSEKE). A Phosphothreonine modification is found at T530. Residues 539–545 (PPRLPQR) are interaction with HCK. Residues 556 to 584 (QLSKEVEILSRNLVEMQRCLSELTNRLHN) are a coiled coil. S686 and S690 each carry phosphoserine.

Oligomer. Interacts with HCK (via SH3 domain). Post-translationally, phosphorylated on Tyr when associated with HCK.

This Homo sapiens (Human) protein is WD repeat and coiled-coil-containing protein.